Here is a 387-residue protein sequence, read N- to C-terminus: MLGGLYGDLPPPTDDEKPSGNSSSVWSSSTKMAPPTLRKPPAFAPPQTILRPLNKPKPIVSAPYKPPPPSNSSQSVLIPANESAPSHQPALVGVTSSVIEEYDPARPNDYEEYKREKKRKATEAEMKREMDKRRQEDEERDKREREEREKERERDNSDPSRLNISGEEAWKRRAAMSGGGSGGKGRSSSPPGNVDGFSIGKSETSGLGVGAGGQMTAAQRMMAKMGWKQGQGLGKSEQGITTPLMAKKTDRRAGVIVNASENKSSSAEKKVVKSVNINGEPTRVLLLRNMVGPGQVDDELEDEVGGECGKYGTVTRVLIFEITEPNFPVHEAVRIFVQFSRPEETTKALVDLDGRYFGGRTVRATFYDEEKFSKNELAPVPGEIPGY.

The disordered stretch occupies residues 1-213 (MLGGLYGDLP…TSGLGVGAGG (213 aa)). Over residues 19 to 29 (SGNSSSVWSSS) the composition is skewed to low complexity. Over residues 103–158 (DPARPNDYEEYKREKKRKATEAEMKREMDKRRQEDEERDKREREEREKERERDNSD) the composition is skewed to basic and acidic residues. The G-patch domain maps to 214 to 260 (QMTAAQRMMAKMGWKQGQGLGKSEQGITTPLMAKKTDRRAGVIVNAS). Residues 283 to 369 (RVLLLRNMVG…RTVRATFYDE (87 aa)) form the RRM domain.

As to quaternary structure, component of the SWAP1-SFPS-RRC1 splicing factor complex which modulates pre-mRNA splicing to promote photomorphogenesis. Interacts with SWAP1 in a light-independent manner. Associates with the photoreceptor phytochrome B (phyB) in nuclear photobodies upon response to red light. Binds to the splicing factor 1 SF1, involved in 3' splicing site recognition. In terms of tissue distribution, expressed ubiquitously with highest levels in dry seeds and in cells surrounding the base of trichomes and guard cells.

It is found in the nucleus. It localises to the nucleus speckle. As a member of the SWAP1-SFPS-RRC1 splicing factor complex, modulates photomorphogenesis by regulating the gene expression and pre-messenger RNA (mRNA) alternative splicing of a large number of genes, including those involved in plant responses to light signaling, probably by helping in the 3' splice site determination. Associates with and regulates EARLY FLOWERING 3 (ELF3) mRNA processing, a key component of the circadian clock also involved in photomorphogenesis. Required for light-regulated (red, far-red and blue lights) photomorphogenesis in a PHYB- and PHYTOCHROME INTERACTING FACTORS- (PIFs) dependent manner. Promotes flowering under both short (SD) and long days (LD). Controls abscisic acid (ABA) sensitivity during seed development, stomatal responsiveness and germination by monitoring ABI3 splicing, upstream of the splicing factor SUPPRESSOR OF ABI3-ABI5. Seems to be involved in the resistance to UV light and chemical DNA-damaging agents. This is DNA-damage-repair/toleration protein 111 from Arabidopsis thaliana (Mouse-ear cress).